We begin with the raw amino-acid sequence, 236 residues long: MPAGRWTATRRTWRSRRRRLVFIVLSVLILPYALIGLYLLEFIHPVSTLMLRDLVLLRGYDRQWVEFDDIAPVLVQSVMMSEDGQFCAHAGIDWAQMRGVVEDALDGEQTRGASTIPMQTVKNLFLWNGRSFVRKAMELPLAIAADFAWSKRRLMEIYLNVAEWGEGIYGIEAAARHHFGVSAAKLSRRQAALLAVSLPNPIDRTAGKPGRGLRRLAAVIERRAGRSGGYITCLYD.

Residues 20-40 (LVFIVLSVLILPYALIGLYLL) form a helical membrane-spanning segment.

It belongs to the glycosyltransferase 51 family.

The protein resides in the cell inner membrane. The enzyme catalyses [GlcNAc-(1-&gt;4)-Mur2Ac(oyl-L-Ala-gamma-D-Glu-L-Lys-D-Ala-D-Ala)](n)-di-trans,octa-cis-undecaprenyl diphosphate + beta-D-GlcNAc-(1-&gt;4)-Mur2Ac(oyl-L-Ala-gamma-D-Glu-L-Lys-D-Ala-D-Ala)-di-trans,octa-cis-undecaprenyl diphosphate = [GlcNAc-(1-&gt;4)-Mur2Ac(oyl-L-Ala-gamma-D-Glu-L-Lys-D-Ala-D-Ala)](n+1)-di-trans,octa-cis-undecaprenyl diphosphate + di-trans,octa-cis-undecaprenyl diphosphate + H(+). It functions in the pathway cell wall biogenesis; peptidoglycan biosynthesis. Functionally, peptidoglycan polymerase that catalyzes glycan chain elongation from lipid-linked precursors. In Rhizobium meliloti (strain 1021) (Ensifer meliloti), this protein is Biosynthetic peptidoglycan transglycosylase.